A 407-amino-acid polypeptide reads, in one-letter code: Aspartokinase (407 aa).

7 to 10 (KFGG) serves as a coordination point for ATP. 25 to 30 (RVIEEV) provides a ligand contact to substrate. Residue S41 coordinates ATP. Substrate-binding positions include 47–49 (TDE), E74, 125–126 (LD), 150–153 (RGGS), and S153. ATP is bound by residues 173–174 (TD) and 179–184 (FTTDPR). 2 consecutive ACT domains span residues 264–338 (VTVV…LAKV) and 340–407 (IVGS…AVRS). Residues 289-291 (NVD), Q295, 351-352 (VA), 365-366 (EI), and 372-373 (SE) each bind substrate.

This sequence belongs to the aspartokinase family. In terms of assembly, tetramer consisting of 2 isoforms Alpha (catalytic and regulation) and of a homodimer of 2 isoforms Beta (regulation).

The enzyme catalyses L-aspartate + ATP = 4-phospho-L-aspartate + ADP. It functions in the pathway amino-acid biosynthesis; L-lysine biosynthesis via DAP pathway; (S)-tetrahydrodipicolinate from L-aspartate: step 1/4. Its pathway is amino-acid biosynthesis; L-methionine biosynthesis via de novo pathway; L-homoserine from L-aspartate: step 1/3. The protein operates within amino-acid biosynthesis; L-threonine biosynthesis; L-threonine from L-aspartate: step 1/5. With respect to regulation, lysine-sensitive. Functionally, catalyzes the phosphorylation of the beta-carboxyl group of aspartic acid with ATP to yield 4-phospho-L-aspartate, which is involved in the branched biosynthetic pathway leading to the biosynthesis of amino acids threonine, isoleucine and methionine. This Geobacillus stearothermophilus (Bacillus stearothermophilus) protein is Aspartokinase (lysC).